The sequence spans 732 residues: Protein DIA2 (732 aa).

TPR repeat units lie at residues V15 to Y48, I78 to N111, and K113 to D145. The 48-residue stretch at T204–F251 folds into the F-box domain. S393 carries the post-translational modification Phosphoserine. LRR repeat units follow at residues L425 to G449, F480 to F505, W509 to Q532, L550 to Q574, G579 to T602, L616 to S637, and L645 to K669.

This sequence belongs to the DIA2 family. Component of the SCF(DIA2) complex containing CDC53, SKP1, RBX1 and DIA2. Interacts with SKP1.

The protein resides in the nucleus. F-box protein component of a SCF (SKP1-CUL1-F-box protein) E3 ubiquitin-protein ligase complex which mediates the ubiquitination and subsequent proteasomal degradation of target proteins. Probably recognizes and binds to phosphorylated target proteins. The SCF(DIA2) complex is specifically involved in the pheromone induced degradation of phosphorylated TEC1. The SCF(DIA2) complex binds to DNA replication origins. Involved in DNA replication, genome stability, and the control of cell cycle, probably through its association to replication origins to facilitate the ubiquitination of another origin-binding protein. Required for invasive growth and growth under alkaline conditions. In Saccharomyces cerevisiae (strain ATCC 204508 / S288c) (Baker's yeast), this protein is Protein DIA2 (DIA2).